Consider the following 83-residue polypeptide: Holin-like protein 24.1 (83 aa).

Residues 1–45 (MEQMRQDIIELKQNDKSQEQRISLLERTSDRHDQQIQAVTESLSK) adopt a coiled-coil conformation. Residues 57–77 (ITGAIISTLSTVVVGGILTIV) form a helical membrane-spanning segment.

The protein localises to the host cell inner membrane. Functionally, probably functions as a holin together with holin-like protein 26. Accumulates harmlessly in the cytoplasmic membrane until it reaches a critical concentration that triggers the formation of micron-scale pores (holes) causing host cell membrane disruption and endolysin escape into the periplasmic space. Determines the precise timing of host cell lysis. The chain is Holin-like protein 24.1 (24.1) from Bacillus subtilis (Bacteriophage SPP1).